The sequence spans 839 residues: Putative AC9 transposase (839 aa).

Over residues 32 to 43 (SSSNANGTATDP) the composition is skewed to polar residues. Residues 32–85 (SSSNANGTATDPSQDDMAIVHEPQPQPQPQPEPQPQPQPEPEEEAPQKRAKKCT) form a disordered region. Pro residues predominate over residues 55–70 (QPQPQPQPEPQPQPQP).

This Zea mays (Maize) protein is Putative AC9 transposase.